Consider the following 324-residue polypeptide: Beta-ketoacyl-[acyl-carrier-protein] synthase III (324 aa).

Active-site residues include Cys-112 and His-249. Positions 250-254 (QANRR) are ACP-binding. Asn-279 is a catalytic residue.

This sequence belongs to the thiolase-like superfamily. FabH family. Homodimer.

It localises to the cytoplasm. It catalyses the reaction malonyl-[ACP] + acetyl-CoA + H(+) = 3-oxobutanoyl-[ACP] + CO2 + CoA. It participates in lipid metabolism; fatty acid biosynthesis. Functionally, catalyzes the condensation reaction of fatty acid synthesis by the addition to an acyl acceptor of two carbons from malonyl-ACP. Catalyzes the first condensation reaction which initiates fatty acid synthesis and may therefore play a role in governing the total rate of fatty acid production. Possesses both acetoacetyl-ACP synthase and acetyl transacylase activities. Its substrate specificity determines the biosynthesis of branched-chain and/or straight-chain of fatty acids. In Streptococcus pyogenes serotype M3 (strain ATCC BAA-595 / MGAS315), this protein is Beta-ketoacyl-[acyl-carrier-protein] synthase III.